A 377-amino-acid polypeptide reads, in one-letter code: Nitric oxide reductase FlRd-NAD(+) reductase (377 aa).

Belongs to the FAD-dependent oxidoreductase family. FAD is required as a cofactor.

It is found in the cytoplasm. It catalyses the reaction 2 reduced [nitric oxide reductase rubredoxin domain] + NAD(+) + H(+) = 2 oxidized [nitric oxide reductase rubredoxin domain] + NADH. The protein operates within nitrogen metabolism; nitric oxide reduction. One of at least two accessory proteins for anaerobic nitric oxide (NO) reductase. Reduces the rubredoxin moiety of NO reductase. The polypeptide is Nitric oxide reductase FlRd-NAD(+) reductase (Escherichia coli O81 (strain ED1a)).